An 868-amino-acid chain; its full sequence is Lysosomal cholesterol signaling protein (868 aa).

The Lumenal portion of the chain corresponds to 1–36; sequence MDSYFSAKNSTLAGDMNATWPASHGFNATGDPPSMS. The interval 1-368 is PIN-like transporter; sequence MDSYFSAKNS…SAWLLTFPTM (368 aa). 3 N-linked (GlcNAc...) asparagine glycosylation sites follow: N9, N17, and N27. A helical transmembrane segment spans residues 37 to 57; sequence ITRLFPALLECFGIVLCGYIA. Cholesterol contacts are provided by F41 and Y55. At 58–77 the chain is on the cytoplasmic side; that stretch reads GRANIITSTQAKGLGNFVSR. A helical membrane pass occupies residues 78–98; the sequence is FALPALLFKNMVVLNFSNVDW. Residues 99–102 lie on the Lumenal side of the membrane; sequence AFLY. Residues 103-123 form a helical membrane-spanning segment; sequence SVLIGKASVFFIVCVLTLLVA. At 124–131 the chain is on the cytoplasmic side; that stretch reads SPESRFSK. The chain crosses the membrane as a discontinuously helical span at residues 132–152; sequence AGLFPIFATQSNDFALGYPIV. At 153-165 the chain is on the lumenal side; the sequence is EALYQSTYPEYLQ. Residues 166-186 traverse the membrane as a helical segment; that stretch reads YIYLVAPISLMMLNPIGFIFC. Residues 187–211 are Cytoplasmic-facing; the sequence is EIQKSKDTQNASQNKAKIVGLGFLR. The chain crosses the membrane as a discontinuously helical span at residues 212–232; the sequence is VLQNPIVFMVFVGIAFNFILD. The Lumenal portion of the chain corresponds to 233 to 241; that stretch reads KKIPVYMEN. Residues 242 to 262 form a discontinuously helical membrane-spanning segment; the sequence is FLDGLANSFSGSALFYLGLTM. Residues 263-271 are Cytoplasmic-facing; it reads VGKIRRLKK. Cholesterol is bound by residues G264, K265, and I266. Residues 272–292 traverse the membrane as a helical segment; the sequence is SAFVVLTLLITAKLLVLPLLC. Residues 293-313 are Lumenal-facing; sequence REMVELLDKGDSVVNHTSLSN. A glycan (N-linked (GlcNAc...) asparagine) is linked at N307. The discontinuously helical transmembrane segment at 314 to 334 threads the bilayer; it reads YAFLYGVFPVAPGVAIFATQF. Over 335–344 the chain is Cytoplasmic; that stretch reads NMEVEIITSG. The chain crosses the membrane as a helical span at residues 345 to 365; sequence MVISTFVSAPIMYVSAWLLTF. Topologically, residues 366–379 are lumenal; it reads PTMDAKPLAYAIQN. A GPCR region spans residues 378 to 715; it reads QNVSFDISII…FGIFGLDKHL (338 aa). N-linked (GlcNAc...) asparagine glycosylation occurs at N379. Residues 380 to 400 traverse the membrane as a helical segment; sequence VSFDISIISLVSLIWSLSILL. Residues 401–412 lie on the Cytoplasmic side of the membrane; sequence LSKKYKQLPHML. Residues 413–433 form a helical membrane-spanning segment; it reads TANLLIAQTIVCAGMMIWNFV. Residues 434-436 are Lumenal-facing; that stretch reads KEK. A helical transmembrane segment spans residues 437–457; it reads NFVGQILVFVLLYSSLYSTYL. The Cytoplasmic segment spans residues 458-478; it reads WTGLLAVSLFLLKKRESVQLP. A helical transmembrane segment spans residues 479 to 499; it reads VGIIIISGWGIPALLVGVLLI. Topologically, residues 500–518 are lumenal; that stretch reads TGKHNGDSIDSAFFYGKEQ. Residues 519-539 form a helical membrane-spanning segment; sequence MITTAVTLFCSILIAGVSLMC. Topologically, residues 540-658 are cytoplasmic; the sequence is MNRTTQAGHY…GDPQLTRHVL (119 aa). The disordered stretch occupies residues 550 to 582; the sequence is EGFGQSQNHKPVEPGSTAFEENPAPTNEPELFP. Cholesterol is bound at residue R655. The chain crosses the membrane as a helical span at residues 659–679; sequence LCLLLIIGLFANLSSCLWWLF. At 680–689 the chain is on the lumenal side; it reads NHETGRLYVE. A helical membrane pass occupies residues 690 to 710; that stretch reads LQFFCAVFNFGQGFISFGIFG. Over 711-868 the chain is Cytoplasmic; that stretch reads LDKHLIILPF…SSPPSVSPKT (158 aa). The DEP domain occupies 755–833; that stretch reads YHRDLCIRNI…DEYLFYRFLQ (79 aa). A disordered region spans residues 836–868; the sequence is PEQSPPARTLRDHQEESYKEIGHSSPPSVSPKT. Residues 844–857 show a composition bias toward basic and acidic residues; sequence TLRDHQEESYKEIG.

In terms of assembly, homodimer; via the transporter region and DEP domain. Interacts with the GATOR1 complex; preventing interaction between GATOR1 and KICSTOR; interaction is disrupted upon cholesterol starvation. In terms of tissue distribution, widely expressed in adult tissues and during development. In brain, widely distributed in forebrain regions, while it shows a more restricted distribution in the midbrain and hindbrain regions. Expressed at highest level in the lateral part of striatum and hippocampus.

The protein localises to the lysosome membrane. Functionally, cholesterol-binding protein that acts as a regulator of mTORC1 signaling pathway. Acts as a sensor of cholesterol to signal cholesterol sufficiency to mTORC1: in presence of cholesterol, binds cholesterol, leading to disruption of the interaction between the GATOR1 and KICSTOR complexes and promotion of mTORC1 signaling. Upon cholesterol starvation, GPR155/LYCHOS is unable to perturb the association between GATOR1 and KICSTOR, leading to mTORC1 signaling inhibition. Binds indole-3-acetic acid and may play a role in tryptophan metabolism. This is Lysosomal cholesterol signaling protein from Mus musculus (Mouse).